The sequence spans 303 residues: D-alanyl-D-alanine carboxypeptidase (303 aa).

Residues 7-23 (LLLLLFLIYLGYDYVNE) form a helical membrane-spanning segment. The interval 37 to 56 (DQNPKEHLENSGTSENTQEK) is disordered. Residues 154–156 (YAL) and serine 161 each bind substrate. Zn(2+)-binding residues include histidine 163 and aspartate 170. Glutamate 213 acts as the Proton donor/acceptor in catalysis. Histidine 216 contributes to the Zn(2+) binding site.

Belongs to the peptidase M15B family. Zn(2+) serves as cofactor.

It is found in the cell membrane. Its activity is regulated as follows. The DD-carboxypeptidase activity is not inhibited by beta-lactam antibiotics. Its function is as follows. Cleaves the C-terminal D-alanine residue of UDP-muramyl-pentapeptide (UDP-MurNAc-L-Ala-D-Glu-mDAP-D-Ala-D-Ala) or diacetyl-L-Lys-D-Ala-D-Ala. However the physiological substrate likely contains L-Lys instead of mDAP at the third position of the pentapeptide. Also releases the C-terminal D-lactate from UDP-MurNAc-L-Ala-D-Glu-mDAP-D-Ala-D-lactate, a depsipeptide produced by the vancomycin resistance protein VanA. Therefore, VanY should contribute in vivo to the hydrolysis of both the D-alanyl-D-alanine- and the depsipeptide-containing peptidoglycan precursors. Is not necessary for vancomycin resistance of E.faecium BM4147 and perhaps not W14-9. Does not display transpeptidase or beta-lactamase activities. In Enterococcus faecium (Streptococcus faecium), this protein is D-alanyl-D-alanine carboxypeptidase.